Reading from the N-terminus, the 464-residue chain is uncharacterized protein (464 aa).

Residues 13 to 71 (MLKVSDIIQIKIDKIVFGGEGLGYYNGFAVFVPMSIPEDELEIEIISIKKTYARGLIKN) enclose the TRAM domain. Residues Q295, Y324, E345, and D393 each contribute to the S-adenosyl-L-methionine site. C420 acts as the Nucleophile in catalysis.

It belongs to the class I-like SAM-binding methyltransferase superfamily. RNA M5U methyltransferase family.

This is an uncharacterized protein from Fusobacterium nucleatum subsp. nucleatum (strain ATCC 25586 / DSM 15643 / BCRC 10681 / CIP 101130 / JCM 8532 / KCTC 2640 / LMG 13131 / VPI 4355).